The following is a 505-amino-acid chain: 2,3-bisphosphoglycerate-independent phosphoglycerate mutase (505 aa).

Mn(2+)-binding residues include aspartate 11 and serine 61. The Phosphoserine intermediate role is filled by serine 61. Residues histidine 122, 152 to 153 (RD), arginine 184, arginine 190, 258 to 261 (RPDR), and lysine 331 each bind substrate. Positions 396, 400, 437, 438, and 455 each coordinate Mn(2+).

Belongs to the BPG-independent phosphoglycerate mutase family. In terms of assembly, monomer. Requires Mn(2+) as cofactor.

It carries out the reaction (2R)-2-phosphoglycerate = (2R)-3-phosphoglycerate. It participates in carbohydrate degradation; glycolysis; pyruvate from D-glyceraldehyde 3-phosphate: step 3/5. Its function is as follows. Catalyzes the interconversion of 2-phosphoglycerate and 3-phosphoglycerate. The polypeptide is 2,3-bisphosphoglycerate-independent phosphoglycerate mutase (Mesomycoplasma hyopneumoniae (strain 7448) (Mycoplasma hyopneumoniae)).